Consider the following 249-residue polypeptide: Cilia- and flagella-associated protein 410 (249 aa).

LRR repeat units lie at residues 19-40 (NVRKLNCWGSQLTDISICREMP), 41-62 (SLEVITLSVNSVSTLEPVRSCR), and 63-84 (RLSELYLRRNRIPSLNELFYLK). The LRRCT domain maps to 97-137 (NPCCGTSPHLYRMTVLRNLPHLQKLDNQAVTEEELTRALME). Residues 146–203 (HREGAGNGCPKPPYALNSVSSATETSQHLLSYTEETEVQGQTTTDQSPSFSPRDTMRS) are disordered. Over residues 162-175 (NSVSSATETSQHLL) the composition is skewed to polar residues.

In terms of assembly, found in a complex with CFAP410, NEK1 and SPATA7. Interacts with NEK1. Expressed in the retina.

The protein resides in the cell projection. Its subcellular location is the cilium. The protein localises to the cytoplasm. It is found in the cytoskeleton. It localises to the cilium basal body. The protein resides in the mitochondrion. Its subcellular location is the photoreceptor outer segment. In terms of biological role, plays a role in cilia formation and/or maintenance. Plays a role in the regulation of cell morphology and cytoskeletal organization. Involved in DNA damage repair. The polypeptide is Cilia- and flagella-associated protein 410 (Mus musculus (Mouse)).